The primary structure comprises 279 residues: Tryptophan synthase alpha chain (279 aa).

Residues E50 and D61 each act as proton acceptor in the active site.

The protein belongs to the TrpA family. Tetramer of two alpha and two beta chains.

The enzyme catalyses (1S,2R)-1-C-(indol-3-yl)glycerol 3-phosphate + L-serine = D-glyceraldehyde 3-phosphate + L-tryptophan + H2O. Its pathway is amino-acid biosynthesis; L-tryptophan biosynthesis; L-tryptophan from chorismate: step 5/5. Functionally, the alpha subunit is responsible for the aldol cleavage of indoleglycerol phosphate to indole and glyceraldehyde 3-phosphate. The sequence is that of Tryptophan synthase alpha chain from Brucella melitensis biotype 2 (strain ATCC 23457).